We begin with the raw amino-acid sequence, 200 residues long: uncharacterized protein (200 aa).

This is an uncharacterized protein from Bacillus subtilis (strain 168).